The chain runs to 843 residues: Complement component C7 (843 aa).

Positions 1 to 22 (MKVISLFILVGFIGEFQSFSSA) are cleaved as a signal peptide. The TSP type-1 1 domain occupies 27-80 (NCQWDFYAPWSECNGCTKTQTRRRSVAVYGQYGGQPCVGNAFETQSCEPTRGCP). 7 disulfides stabilise this stretch: C28-C63, C39-C73, C42-C79, C85-C96, C91-C109, C103-C119, and C128-C165. C-linked (Man) tryptophan glycosylation occurs at W36. The LDL-receptor class A domain maps to 83-121 (EGCGERFRCFSGQCISKSLVCNGDSDCDEDSADEDRCED). Positions 108–120 (DCDEDSADEDRCE) are enriched in acidic residues. The disordered stretch occupies residues 108-143 (DCDEDSADEDRCEDSERRPSCDIDKPPPNIELTGNG). The segment covering 121 to 132 (DSERRPSCDIDK) has biased composition (basic and acidic residues). Residues 124–456 (RRPSCDIDKP…EYLDEFDPCH (333 aa)) enclose the MACPF domain. An N-linked (GlcNAc...) asparagine glycan is attached at N202. The segment at 219–240 (SRKRSFFRSSSSSSRSYTSHTN) is disordered. Residues 225 to 234 (FRSSSSSSRS) are compositionally biased toward low complexity. Intrachain disulfides connect C337–C353, C433–C560, C455–C505, C457–C473, C460–C475, C477–C486, C512–C545, C523–C535, C571–C613, C599–C626, C631–C673, and C659–C688. Positions 457-487 (CRPCQNGGLATVEGTHCLCHCKPYTFGAACE) constitute an EGF-like domain. In terms of domain architecture, TSP type-1 2 spans 500–549 (DGGWSCWSSWSPCVQGKKTRSRECNNPPPSGGGRSCVGETTESTQCEDEE). Residues W503, W506, and W509 are each glycosylated (C-linked (Man) tryptophan; partial). Residues 516-538 (KKTRSRECNNPPPSGGGRSCVGE) are disordered. CCP regions lie at residues 545 to 615 (CEDE…RCGE) and 616 to 693 (DLRW…QKEN). 2 consecutive Sushi domains span residues 569 to 628 (EFCP…HCQK) and 629 to 690 (IACV…RCVQ). 2 factor I module (FIM) regions span residues 695-770 (LTQA…ASAE) and 771-843 (KACG…AETQ). T696 carries O-linked (GalNAc...) threonine glycosylation. Cystine bridges form between C702–C713, C715–C750, C721–C743, C728–C763, C773–C782, C776–C789, C791–C825, C797–C818, and C805–C838. N754 carries N-linked (GlcNAc...) (complex) asparagine glycosylation.

Belongs to the complement C6/C7/C8/C9 family. As to quaternary structure, monomer or dimer; as a C5b-7 complex it can also form multimeric rosettes. Component of the membrane attack complex (MAC), composed of complement C5b, C6, C7, C8A, C8B, C8G and multiple copies of the pore-forming subunit C9. In terms of processing, C-, N- and O-glycosylated. O-glycosylated with core 1 or possibly core 8 glycans.

The protein localises to the secreted. It is found in the target cell membrane. With respect to regulation, membrane attack complex (MAC) assembly is inhibited by CD59, thereby protecting self-cells from damage during complement activation. MAC assembly is also inhibited by clusterin (CLU) chaperones that inhibit polymerization of C9. Its function is as follows. Component of the membrane attack complex (MAC), a multiprotein complex activated by the complement cascade, which inserts into a target cell membrane and forms a pore, leading to target cell membrane rupture and cell lysis. The MAC is initiated by proteolytic cleavage of C5 into complement C5b in response to the classical, alternative, lectin and GZMK complement pathways. The complement pathways consist in a cascade of proteins that leads to phagocytosis and breakdown of pathogens and signaling that strengthens the adaptive immune system. C7 serves as a membrane anchor. During MAC assembly, associates with C5b and C6 to form the C5b-7 complex, a key lipophilic precursor of the MAC complex, which associates with the outer leaflet and reduces the energy for membrane bending. In Homo sapiens (Human), this protein is Complement component C7.